Consider the following 398-residue polypeptide: Acetate kinase 1 (398 aa).

N9 provides a ligand contact to Mg(2+). K16 lines the ATP pocket. Substrate is bound at residue R89. The active-site Proton donor/acceptor is the D146. Residues 206–210 (HLGNG), 281–283 (DCR), and 329–333 (GIGEN) contribute to the ATP site. E384 provides a ligand contact to Mg(2+).

It belongs to the acetokinase family. Homodimer. The cofactor is Mg(2+). It depends on Mn(2+) as a cofactor.

It localises to the cytoplasm. The catalysed reaction is acetate + ATP = acetyl phosphate + ADP. It functions in the pathway metabolic intermediate biosynthesis; acetyl-CoA biosynthesis; acetyl-CoA from acetate: step 1/2. In terms of biological role, catalyzes the formation of acetyl phosphate from acetate and ATP. Can also catalyze the reverse reaction. This chain is Acetate kinase 1, found in Vibrio cholerae serotype O1 (strain ATCC 39315 / El Tor Inaba N16961).